Here is an 89-residue protein sequence, read N- to C-terminus: Mu-like prophage FluMu DNA-binding protein Ner (89 aa).

Positions 57–76 (ERLVANAIGVPPEVIWAGRF) form a DNA-binding region, H-T-H motif.

It belongs to the ner transcriptional regulatory family.

Negative regulator of transcription starting from the Pe and Pc promoters of Mu. Also negatively regulates its own gene transcription. This chain is Mu-like prophage FluMu DNA-binding protein Ner (nlp), found in Haemophilus influenzae (strain ATCC 51907 / DSM 11121 / KW20 / Rd).